Consider the following 406-residue polypeptide: Immediate early response gene 5-like protein (406 aa).

Disordered stretches follow at residues 166-195 and 216-235; these read QPPH…APAA and AAPS…PSSS. Positions 182 to 193 are enriched in pro residues; that stretch reads QPGPAPLPPPAP.

Belongs to the IER family.

The sequence is that of Immediate early response gene 5-like protein (Ier5l) from Mus musculus (Mouse).